We begin with the raw amino-acid sequence, 263 residues long: Triosephosphate isomerase (263 aa).

A substrate-binding site is contributed by 10 to 12 (NWK). H104 functions as the Electrophile in the catalytic mechanism. Catalysis depends on E176, which acts as the Proton acceptor. Substrate-binding positions include G182, S221, and 242–243 (GG).

Belongs to the triosephosphate isomerase family. Homodimer.

It localises to the cytoplasm. The catalysed reaction is D-glyceraldehyde 3-phosphate = dihydroxyacetone phosphate. The protein operates within carbohydrate biosynthesis; gluconeogenesis. It functions in the pathway carbohydrate degradation; glycolysis; D-glyceraldehyde 3-phosphate from glycerone phosphate: step 1/1. In terms of biological role, involved in the gluconeogenesis. Catalyzes stereospecifically the conversion of dihydroxyacetone phosphate (DHAP) to D-glyceraldehyde-3-phosphate (G3P). This Haemophilus influenzae (strain PittEE) protein is Triosephosphate isomerase.